The following is a 182-amino-acid chain: Dual-action ribosomal maturation protein DarP (182 aa).

Belongs to the DarP family.

The protein localises to the cytoplasm. Member of a network of 50S ribosomal subunit biogenesis factors which assembles along the 30S-50S interface, preventing incorrect 23S rRNA structures from forming. Promotes peptidyl transferase center (PTC) maturation. The chain is Dual-action ribosomal maturation protein DarP from Yersinia pestis.